The following is a 1288-amino-acid chain: Probable serine/threonine-protein kinase drkD (1288 aa).

The span at 1 to 12 shows a compositional bias: polar residues; the sequence is MEGSFQFNKSKQ. Disordered stretches follow at residues 1–132, 156–223, and 269–386; these read MEGS…QYHP, FNVS…PEEI, and SFGH…DDEE. Composition is skewed to low complexity over residues 13-79 and 156-220; these read TNNN…NSTS and FNVS…QQQP. Residues 221–248 adopt a coiled-coil conformation; the sequence is EEIEGELNRERQERDKMLHEEAEIEQYK. Residues 271-291 show a composition bias toward polar residues; that stretch reads GHITSANSDETTNNESGSPIN. Residues 302 to 343 show a composition bias toward basic and acidic residues; the sequence is PHSSHNEDHQSDQDNHGQFMNDEHQSTDDDQNKSDNEKESES. Positions 344 to 354 are enriched in polar residues; it reads ARNSGDLQQKV. Acidic residues predominate over residues 376–386; the sequence is EGEEEDDDDEE. LRR repeat units follow at residues 400-421, 423-444, 446-468, 469-490, 492-513, 517-538, and 540-561; these read KSTKLSLSNCWLKVIPTDVWSI, ELRDLDLSANQLKKVSKSIGLL, HLKRLRLNHNQLTALPKELYSLP, RLTTLYLNNNNFKVVPKEINRL, SLKTLDLSFNQITDISPQTNLH, NLVELRLRYNQLSSLPQNMLES, and HLQVLWLEGNRLPLNKAILKKS. Disordered regions lie at residues 690–717, 733–764, and 796–825; these read WDQQQQQQQQQSPNVSTPPISTSPVLTG, PTQQINNPPSPVTQFNQASPQHNNNQQQQQQQ, and QQQQQQNGSPQQPHVNNNNNNNIQQNKDHQ. 2 stretches are compositionally biased toward polar residues: residues 701–717 and 733–757; these read SPNVSTPPISTSPVLTG and PTQQINNPPSPVTQFNQASPQHNNN. One can recognise a Protein kinase domain in the interval 851 to 1104; sequence IAIGARIGRG…EILPIMEGMI (254 aa). ATP is bound by residues 857–865 and K878; that span reads IGRGGYGQV. Catalysis depends on D974, which acts as the Proton acceptor. Disordered regions lie at residues 1118–1141 and 1245–1288; these read GRPIPYVGPPEKDPSNKQPPQNMA and QQQL…NDKK. A compositionally biased stretch (low complexity) spans 1257–1268; the sequence is NRLNYNFNNSNN. Residues 1269–1282 are compositionally biased toward polar residues; that stretch reads SDIQPMQQENNYRM.

It belongs to the protein kinase superfamily. TKL Ser/Thr protein kinase family.

The enzyme catalyses L-seryl-[protein] + ATP = O-phospho-L-seryl-[protein] + ADP + H(+). The catalysed reaction is L-threonyl-[protein] + ATP = O-phospho-L-threonyl-[protein] + ADP + H(+). This Dictyostelium discoideum (Social amoeba) protein is Probable serine/threonine-protein kinase drkD (drkD).